Here is a 200-residue protein sequence, read N- to C-terminus: uncharacterized protein (200 aa).

Positions 149–200 (APDPGGSVATEEVLRSDDRDSHTQDSASEWPEGNDSVGSAAMRIDLSRIGGT) are disordered. Basic and acidic residues predominate over residues 160 to 171 (EVLRSDDRDSHT).

It to A.tumefaciens Ti plasmid conjugal transfer region I ORFR2 and ORFR3.

This is an uncharacterized protein from Sinorhizobium fredii (strain NBRC 101917 / NGR234).